A 131-amino-acid chain; its full sequence is Olfactory receptor-like protein COR9 (131 aa).

Over 1–16 (VAICSPLLYSTVMTKR) the chain is Cytoplasmic. Residues 17-41 (VCMQLVVGSYMGGLLNSLTHTCGLL) form a helical membrane-spanning segment. Residues 42-82 (GLPFCGPNVINHYFCDIPPLLQLACSDTHRNETLLLAFSAV) are Extracellular-facing. N-linked (GlcNAc...) asparagine glycosylation is present at N72. Residues 83–103 (IALFTLFVITASYMLILSVIL) traverse the membrane as a helical segment. Residues 104–116 (KIQSDDGRKKTFH) are Cytoplasmic-facing. The helical transmembrane segment at 117-131 (TCASHLTAITIFFGS) threads the bilayer.

Belongs to the G-protein coupled receptor 1 family.

Its subcellular location is the cell membrane. Functionally, odorant receptor. The protein is Olfactory receptor-like protein COR9 (COR9) of Gallus gallus (Chicken).